Here is a 202-residue protein sequence, read N- to C-terminus: MDKFTLITAKAAPMMAANTDTDVIMPKQFLKGIDRKGLDRGVFFDLRFNLDGTPNEKFILNQADWQGSQFLVVGPNFGCGSSREHAVWGLKQLGIRALIGTSFAGIFNDNCLRNGVLTICVSDQEIEQIATTVSNPATNTISVDLEGQKVLTENGEIAFDVDPLKKEMLIKGLDAVGFTLSMKDDILAFEQSYFKANPWLKL.

Belongs to the LeuD family. LeuD type 1 subfamily. As to quaternary structure, heterodimer of LeuC and LeuD.

The catalysed reaction is (2R,3S)-3-isopropylmalate = (2S)-2-isopropylmalate. It participates in amino-acid biosynthesis; L-leucine biosynthesis; L-leucine from 3-methyl-2-oxobutanoate: step 2/4. Its function is as follows. Catalyzes the isomerization between 2-isopropylmalate and 3-isopropylmalate, via the formation of 2-isopropylmaleate. The chain is 3-isopropylmalate dehydratase small subunit 1 from Mannheimia succiniciproducens (strain KCTC 0769BP / MBEL55E).